Consider the following 209-residue polypeptide: Non-structural protein 5 (209 aa).

Asp86 contacts Mg(2+).

Belongs to the rotavirus NSP5 family. In terms of assembly, homodimer. Interacts with VP1. Interacts with VP2. Interacts with NSP2 and NSP6. Requires Mg(2+) as cofactor. In terms of processing, O-glycosylated.

It localises to the host cytoplasm. Functionally, plays an essential role in the viral genome replication. Participates, together with NSP2, in the formation of viral factories (viroplasms) which are large inclusions in the host cytoplasm where replication intermediates are assembled and viral RNA replication takes place. Orchestrates the recruitment of viroplasmic proteins such as capsid proteins to these factories. This is Non-structural protein 5 from Bos taurus (Bovine).